Reading from the N-terminus, the 22-residue chain is Myofibril-bound serine protease (22 aa).

The protein belongs to the peptidase S1 family. As to expression, detected in muscle (at protein level).

The protein resides in the cytoplasm. Its activity is regulated as follows. Inhibited by the serine protease inhibitors, antipain, aprotinin, DFP, leupeptin, STI and TLCK, and by the cysteine proteinase inhibitors DTNB and to a lesser extent E-64. Not inhibited by the metalloproteinase inhibitor EDTA. Serine protease that selectively cleaves Arg-|-Xaa bonds. The chain is Myofibril-bound serine protease from Cyprinus carpio (Common carp).